Here is a 362-residue protein sequence, read N- to C-terminus: Serpentine receptor class delta-2 (362 aa).

7 helical membrane-spanning segments follow: residues 27-47 (LSCL…YLIW), 57-77 (YAIY…ISFF), 104-124 (FCYF…WILL), 144-164 (LIRN…VYVF), 209-229 (LISI…ILYF), 264-284 (GIPI…FGII), and 292-312 (ITFR…IIFV).

Belongs to the nematode receptor-like protein srd family.

It localises to the membrane. Thought to be a chemosensory receptor. This is Serpentine receptor class delta-2 (srd-2) from Caenorhabditis elegans.